A 273-amino-acid chain; its full sequence is Putative expansin-B2 (273 aa).

The signal sequence occupies residues 1 to 29 (MTILVVDRYYMLMNLLFALTCLLLNLTHC). Asn36 carries an N-linked (GlcNAc...) asparagine glycan. Residues 65–173 (GGACGYGNAV…KKVECNYIGK (109 aa)) enclose the Expansin-like EG45 domain. Cystine bridges form between Cys68–Cys97, Cys100–Cys168, and Cys105–Cys111. In terms of domain architecture, Expansin-like CBD spans 186 to 269 (NSFAVLVAYV…NWQPGAIYKS (84 aa)).

The protein belongs to the expansin family. Expansin B subfamily.

The protein resides in the secreted. It is found in the cell wall. Its subcellular location is the membrane. Functionally, may cause loosening and extension of plant cell walls by disrupting non-covalent bonding between cellulose microfibrils and matrix glucans. No enzymatic activity has been found. The polypeptide is Putative expansin-B2 (EXPB2) (Arabidopsis thaliana (Mouse-ear cress)).